Reading from the N-terminus, the 335-residue chain is Biotin synthase (335 aa).

Residues 46–274 (YKVQLASLFS…KSKIRLSAGR (229 aa)) form the Radical SAM core domain. C61, C65, and C68 together coordinate [4Fe-4S] cluster. [2Fe-2S] cluster is bound by residues C105, C137, C197, and R269.

The protein belongs to the radical SAM superfamily. Biotin synthase family. In terms of assembly, homodimer. It depends on [4Fe-4S] cluster as a cofactor. Requires [2Fe-2S] cluster as cofactor.

The enzyme catalyses (4R,5S)-dethiobiotin + (sulfur carrier)-SH + 2 reduced [2Fe-2S]-[ferredoxin] + 2 S-adenosyl-L-methionine = (sulfur carrier)-H + biotin + 2 5'-deoxyadenosine + 2 L-methionine + 2 oxidized [2Fe-2S]-[ferredoxin]. Its pathway is cofactor biosynthesis; biotin biosynthesis; biotin from 7,8-diaminononanoate: step 2/2. Functionally, catalyzes the conversion of dethiobiotin (DTB) to biotin by the insertion of a sulfur atom into dethiobiotin via a radical-based mechanism. This is Biotin synthase from Prochlorococcus marinus (strain MIT 9515).